The primary structure comprises 213 residues: High frequency lysogenization protein HflD homolog (213 aa).

Belongs to the HflD family.

Its subcellular location is the cytoplasm. It is found in the cell inner membrane. The sequence is that of High frequency lysogenization protein HflD homolog from Nitrosococcus oceani (strain ATCC 19707 / BCRC 17464 / JCM 30415 / NCIMB 11848 / C-107).